The primary structure comprises 678 residues: Auxin response factor 7 (678 aa).

A DNA-binding region (TF-B3) is located at residues 128 to 230; sequence FCKTLTASDT…ELRVGVRRLM (103 aa). 2 disordered regions span residues 360–386 and 502–547; these read AVSN…NSIA and GVGQ…SRQV. The 94-residue stretch at 548–641 folds into the PB1 domain; it reads RSCTKVIMQG…EAKQLTPKSK (94 aa). The interval 643–678 is disordered; sequence PIIGDAIKPNPNKQSPESDMPHSDLDSTAPVTDKDC.

The protein belongs to the ARF family. In terms of assembly, homodimers and heterodimers. As to expression, expressed in roots, culms, leaves and young panicles.

It is found in the nucleus. Functionally, auxin response factors (ARFs) are transcriptional factors that bind specifically to the DNA sequence 5'-TGTCTC-3' found in the auxin-responsive promoter elements (AuxREs). This chain is Auxin response factor 7 (ARF7), found in Oryza sativa subsp. japonica (Rice).